A 105-amino-acid polypeptide reads, in one-letter code: MFAVIKTGGKQYRVAANDVITIAKLEGEAGTAVTFGEVLLYADGEGATQVGAPTVSGISVAGEIVAQKRGPKIIAFKKRRRQNSRRKRGHRQDFTVVRVTGISAA.

This sequence belongs to the bacterial ribosomal protein bL21 family. As to quaternary structure, part of the 50S ribosomal subunit. Contacts protein L20.

Its function is as follows. This protein binds to 23S rRNA in the presence of protein L20. The sequence is that of Large ribosomal subunit protein bL21 from Methylobacterium nodulans (strain LMG 21967 / CNCM I-2342 / ORS 2060).